We begin with the raw amino-acid sequence, 415 residues long: Serine hydroxymethyltransferase 1 (415 aa).

(6S)-5,6,7,8-tetrahydrofolate-binding positions include Leu122 and 126 to 128 (GHL). Lys230 is subject to N6-(pyridoxal phosphate)lysine.

This sequence belongs to the SHMT family. Homodimer. It depends on pyridoxal 5'-phosphate as a cofactor.

The protein localises to the cytoplasm. It carries out the reaction (6R)-5,10-methylene-5,6,7,8-tetrahydrofolate + glycine + H2O = (6S)-5,6,7,8-tetrahydrofolate + L-serine. Its pathway is one-carbon metabolism; tetrahydrofolate interconversion. The protein operates within amino-acid biosynthesis; glycine biosynthesis; glycine from L-serine: step 1/1. Catalyzes the reversible interconversion of serine and glycine with tetrahydrofolate (THF) serving as the one-carbon carrier. This reaction serves as the major source of one-carbon groups required for the biosynthesis of purines, thymidylate, methionine, and other important biomolecules. Also exhibits THF-independent aldolase activity toward beta-hydroxyamino acids, producing glycine and aldehydes, via a retro-aldol mechanism. The protein is Serine hydroxymethyltransferase 1 of Cupriavidus pinatubonensis (strain JMP 134 / LMG 1197) (Cupriavidus necator (strain JMP 134)).